Here is a 1065-residue protein sequence, read N- to C-terminus: Cellulose synthase A catalytic subunit 3 [UDP-forming] (1065 aa).

The Cytoplasmic portion of the chain corresponds to 1-260; it reads MESEGETAGK…PSSRINPYRM (260 aa). At Ser3 the chain carries Phosphoserine. 8 residues coordinate Zn(2+): Cys20, Cys23, Cys39, Cys42, Cys47, Cys50, Cys62, and Cys65. Residues 20 to 66 form an RING-type; degenerate zinc finger; the sequence is CQICSDNVGKTVDGDRFVACDICSFPVCRPCYEYERKDGNQSCPQCK. A phosphoserine mark is found at Ser151, Ser211, and Ser216. Residues 261 to 281 form a helical membrane-spanning segment; the sequence is VIMLRLVILCLFLHYRITNPV. The Extracellular segment spans residues 282 to 283; sequence PN. Residues 284 to 304 form a helical membrane-spanning segment; it reads AFALWLVSVICEIWFALSWIL. The Cytoplasmic portion of the chain corresponds to 305-842; sequence DQFPKWFPVN…LERFAYVNTT (538 aa). Ser343, Lys349, Glu350, and Asp379 together coordinate UDP-alpha-D-glucose. The active site involves Asp379. Residues 433–457 are a coiled coil; sequence VKDRRAMKREYEEFKIRINALVSKA. UDP-alpha-D-glucose is bound at residue Lys520. The Mn(2+) site is built by Lys521 and Asp545. Residues 643–672 are disordered; the sequence is SKLCGGSRKKNSKAKKESDKKKSGRHTDST. Over residues 656–670 the composition is skewed to basic and acidic residues; it reads AKKESDKKKSGRHTD. Asp765 is a catalytic residue. Residues 843 to 863 form a helical membrane-spanning segment; that stretch reads IYPITSIPLLMYCTLPAVCLF. Topologically, residues 864 to 874 are extracellular; that stretch reads TNQFIIPQISN. A helical membrane pass occupies residues 875–895; sequence IASIWFLSLFLSIFATGILEM. The Cytoplasmic segment spans residues 896 to 910; sequence RWSGVGIDEWWRNEQ. Residues 911 to 931 form a helical membrane-spanning segment; that stretch reads FWVIGGVSAHLFAVFQGILKV. Residues 932 to 961 lie on the Extracellular side of the membrane; sequence LAGIDTNFTVTSKASDEDGDFAELYLFKWT. N-linked (GlcNAc...) asparagine glycosylation occurs at Asn938. Residues 962–982 traverse the membrane as a helical segment; it reads TLLIPPTTLLIVNLVGVVAGV. Residues 983–993 lie on the Cytoplasmic side of the membrane; the sequence is SYAINSGYQSW. The helical transmembrane segment at 994 to 1014 threads the bilayer; that stretch reads GPLFGKLFFAFWVIVHLYPFL. Residues 1015–1023 lie on the Extracellular side of the membrane; the sequence is KGLMGRQNR. Residues 1024 to 1044 form a helical membrane-spanning segment; it reads TPTIVVVWSVLLASIFSLLWV. Over 1045–1065 the chain is Cytoplasmic; it reads RIDPFTSRVTGPDILECGINC.

It belongs to the glycosyltransferase 2 family. Plant cellulose synthase subfamily. As to quaternary structure, homodimer. Interacts with CESA1 and CESA6. Interacts with STL1 and STL2, but not with GOT1. Binds to CSI1 and CSI3. Interacts with PAT24/TIP1. Zn(2+) is required as a cofactor. Requires Mn(2+) as cofactor. Palmitoylated, in part by PAT24/TIP1. Expressed in young plants, flowers and roots, and to a lower extent in leaves and stems. Localized in all cells except meristematic cells. Accumulates particularly in root caps, root hairs, epidermal layer, midveins of leaves and anthers. Not present in old tissues.

The protein resides in the cell membrane. The protein localises to the golgi apparatus membrane. It catalyses the reaction [(1-&gt;4)-beta-D-glucosyl](n) + UDP-alpha-D-glucose = [(1-&gt;4)-beta-D-glucosyl](n+1) + UDP + H(+). It functions in the pathway glycan metabolism; plant cellulose biosynthesis. Its function is as follows. Catalytic subunit of cellulose synthase terminal complexes ('rosettes'), required for beta-1,4-glucan microfibril crystallization, a major mechanism of the cell wall formation. Involved in the primary cell wall formation, especially in roots. The protein is Cellulose synthase A catalytic subunit 3 [UDP-forming] of Arabidopsis thaliana (Mouse-ear cress).